A 401-amino-acid polypeptide reads, in one-letter code: tRNA(Met) cytidine acetate ligase (401 aa).

Residues 7–20 (VVEYNPFHNGHLYH), Gly-101, Asn-160, and 185–186 (RI) each bind ATP.

The protein belongs to the TmcAL family.

It localises to the cytoplasm. It carries out the reaction cytidine(34) in elongator tRNA(Met) + acetate + ATP = N(4)-acetylcytidine(34) in elongator tRNA(Met) + AMP + diphosphate. Its function is as follows. Catalyzes the formation of N(4)-acetylcytidine (ac(4)C) at the wobble position of elongator tRNA(Met), using acetate and ATP as substrates. First activates an acetate ion to form acetyladenylate (Ac-AMP) and then transfers the acetyl group to tRNA to form ac(4)C34. In Anoxybacillus flavithermus (strain DSM 21510 / WK1), this protein is tRNA(Met) cytidine acetate ligase.